Here is a 356-residue protein sequence, read N- to C-terminus: Holliday junction branch migration complex subunit RuvB (356 aa).

The tract at residues 4 to 190 (TDKLAAERII…FGIVARLEFY (187 aa)) is large ATPase domain (RuvB-L). ATP contacts are provided by residues Leu29, Arg30, Gly71, Lys74, Thr75, Thr76, 137–139 (EDY), Arg180, Tyr190, and Arg227. Thr75 contacts Mg(2+). The tract at residues 191–261 (DAEQLSRIVR…VADAALAMLD (71 aa)) is small ATPAse domain (RuvB-S). The tract at residues 264 to 356 (PVGFDLMDRK…NLWDTPDAEC (93 aa)) is head domain (RuvB-H). DNA-binding residues include Arg300, Arg319, and Arg324.

The protein belongs to the RuvB family. As to quaternary structure, homohexamer. Forms an RuvA(8)-RuvB(12)-Holliday junction (HJ) complex. HJ DNA is sandwiched between 2 RuvA tetramers; dsDNA enters through RuvA and exits via RuvB. An RuvB hexamer assembles on each DNA strand where it exits the tetramer. Each RuvB hexamer is contacted by two RuvA subunits (via domain III) on 2 adjacent RuvB subunits; this complex drives branch migration. In the full resolvosome a probable DNA-RuvA(4)-RuvB(12)-RuvC(2) complex forms which resolves the HJ.

It is found in the cytoplasm. It carries out the reaction ATP + H2O = ADP + phosphate + H(+). The RuvA-RuvB-RuvC complex processes Holliday junction (HJ) DNA during genetic recombination and DNA repair, while the RuvA-RuvB complex plays an important role in the rescue of blocked DNA replication forks via replication fork reversal (RFR). RuvA specifically binds to HJ cruciform DNA, conferring on it an open structure. The RuvB hexamer acts as an ATP-dependent pump, pulling dsDNA into and through the RuvAB complex. RuvB forms 2 homohexamers on either side of HJ DNA bound by 1 or 2 RuvA tetramers; 4 subunits per hexamer contact DNA at a time. Coordinated motions by a converter formed by DNA-disengaged RuvB subunits stimulates ATP hydrolysis and nucleotide exchange. Immobilization of the converter enables RuvB to convert the ATP-contained energy into a lever motion, pulling 2 nucleotides of DNA out of the RuvA tetramer per ATP hydrolyzed, thus driving DNA branch migration. The RuvB motors rotate together with the DNA substrate, which together with the progressing nucleotide cycle form the mechanistic basis for DNA recombination by continuous HJ branch migration. Branch migration allows RuvC to scan DNA until it finds its consensus sequence, where it cleaves and resolves cruciform DNA. In Burkholderia pseudomallei (strain 668), this protein is Holliday junction branch migration complex subunit RuvB.